A 122-amino-acid chain; its full sequence is Large ribosomal subunit protein bL17 (122 aa).

It belongs to the bacterial ribosomal protein bL17 family. As to quaternary structure, part of the 50S ribosomal subunit. Contacts protein L32.

This Wigglesworthia glossinidia brevipalpis protein is Large ribosomal subunit protein bL17.